Reading from the N-terminus, the 358-residue chain is Mesaconyl-CoA hydratase (358 aa).

Positions 44–148 (AHDPGLRLTH…TSSSRPQYGI (105 aa)) constitute a MaoC-like domain.

Belongs to the enoyl-CoA hydratase/isomerase family.

The enzyme catalyses (2R,3S)-beta-methylmalyl-CoA = 2-methylfumaryl-CoA + H2O. In terms of biological role, involved in the methylaspartate cycle. Catalyzes the reversible hydration of mesaconyl-CoA (2-methylfumaryl-CoA) to yield beta-methylmalyl-CoA ((2R,3S)-beta-methylmalyl-CoA). The protein is Mesaconyl-CoA hydratase of Haloarcula marismortui (strain ATCC 43049 / DSM 3752 / JCM 8966 / VKM B-1809) (Halobacterium marismortui).